A 600-amino-acid polypeptide reads, in one-letter code: Elongation factor 4 (600 aa).

Residues 5–187 form the tr-type G domain; it reads KYIRNFSIIA…AIVNKLPPPK (183 aa). GTP contacts are provided by residues 17 to 22 and 134 to 137; these read DHGKST and NKLD.

The protein belongs to the TRAFAC class translation factor GTPase superfamily. Classic translation factor GTPase family. LepA subfamily.

Its subcellular location is the cell inner membrane. It carries out the reaction GTP + H2O = GDP + phosphate + H(+). Functionally, required for accurate and efficient protein synthesis under certain stress conditions. May act as a fidelity factor of the translation reaction, by catalyzing a one-codon backward translocation of tRNAs on improperly translocated ribosomes. Back-translocation proceeds from a post-translocation (POST) complex to a pre-translocation (PRE) complex, thus giving elongation factor G a second chance to translocate the tRNAs correctly. Binds to ribosomes in a GTP-dependent manner. The protein is Elongation factor 4 of Rickettsia conorii (strain ATCC VR-613 / Malish 7).